The chain runs to 496 residues: ATP synthase subunit beta, chloroplastic (496 aa).

Residue 170-177 (GGAGVGKT) participates in ATP binding.

It belongs to the ATPase alpha/beta chains family. In terms of assembly, F-type ATPases have 2 components, CF(1) - the catalytic core - and CF(0) - the membrane proton channel. CF(1) has five subunits: alpha(3), beta(3), gamma(1), delta(1), epsilon(1). CF(0) has four main subunits: a(1), b(1), b'(1) and c(9-12).

It is found in the plastid. It localises to the chloroplast thylakoid membrane. It carries out the reaction ATP + H2O + 4 H(+)(in) = ADP + phosphate + 5 H(+)(out). Produces ATP from ADP in the presence of a proton gradient across the membrane. The catalytic sites are hosted primarily by the beta subunits. The sequence is that of ATP synthase subunit beta, chloroplastic from Dioscorea elephantipes (Elephant's foot yam).